A 506-amino-acid polypeptide reads, in one-letter code: Cytochrome P450 monooxygenase BOA3 (506 aa).

A helical membrane pass occupies residues 15 to 35; the sequence is IYLWIGFVLVVLLAYPTYFAI. Cys-451 contributes to the heme binding site.

Belongs to the cytochrome P450 family. Heme is required as a cofactor.

It localises to the membrane. It functions in the pathway polyketide biosynthesis. Cytochrome P450 monooxygenase; part of the gene cluster A that mediates the biosynthesis of botcinic acid and its botcinin derivatives, acetate-derived polyketides that contribute to virulence when combined with the sesquiterpene botrydial. Botcinic acid and its derivatives have been shown to induce chlorosis and necrosis during host plant infection, but also have antifungal activities. Two polyketide synthases, BOA6 and BOA9, are involved in the biosynthesis of botcinins. BOA6 mediates the formation of the per-methylated tetraketide core by condensation of four units of malonyl-CoA with one unit of acetyl-CoA, which would be methylated in activated methylene groups to yield a bicyclic acid intermediate that could then either be converted to botrylactone derivatives or lose the starter acetate unit through a retro-Claisen type C-C bond cleavage to yield botcinin derivatives. The second polyketide synthase, BOA9, is probably required for the biosynthesis of the tetraketide side chain of botcinins. The methyltransferase (MT) domain within BOA6 is probably responsible for the incorporation of four methyl groups. The trans-enoyl reductase BOA5 might take over the enoyl reductase function of BOA6 that misses an ER domain. The monooxygenases BOA2, BOA3 and BOA4 might be involved in further hydroxylations at C4, C5 and C8, whereas BOA7, close to BOA9, could potentially be involved in the hydroxylation at C4 in the side chain of botcinins. The chain is Cytochrome P450 monooxygenase BOA3 from Botryotinia fuckeliana (strain B05.10) (Noble rot fungus).